Consider the following 1435-residue polypeptide: DNA polymerase III PolC-type (1435 aa).

One can recognise an Exonuclease domain in the interval 420-576 (YVVFDVETTG…YDTEATAYIF (157 aa)).

Belongs to the DNA polymerase type-C family. PolC subfamily.

The protein localises to the cytoplasm. The enzyme catalyses DNA(n) + a 2'-deoxyribonucleoside 5'-triphosphate = DNA(n+1) + diphosphate. Required for replicative DNA synthesis. This DNA polymerase also exhibits 3' to 5' exonuclease activity. The sequence is that of DNA polymerase III PolC-type from Staphylococcus aureus.